A 997-amino-acid polypeptide reads, in one-letter code: Sarcoplasmic/endoplasmic reticulum calcium ATPase 2 (997 aa).

Topologically, residues M1 to T48 are cytoplasmic. Position 38 is a phosphoserine (S38). A helical membrane pass occupies residues L49 to A69. Over C70 to V89 the chain is Lumenal. Residues E90–R110 form a helical membrane-spanning segment. The Cytoplasmic portion of the chain corresponds to N111–L253. The helical transmembrane segment at D254 to I273 threads the bilayer. The Lumenal portion of the chain corresponds to I274–Y295. Residues Y294 and Y295 each carry the 3'-nitrotyrosine modification. Residues F296–A313 traverse the membrane as a helical segment. Ca(2+) is bound by residues V304, A305, I307, and E309. Topologically, residues V314–M756 are cytoplasmic. Residue D351 is the 4-aspartylphosphate intermediate of the active site. The Mg(2+) site is built by D351 and T353. T353 contributes to the ATP binding site. A Phosphothreonine modification is found at T441. ATP-binding residues include E442, R489, and K514. S531 is subject to Phosphoserine. R559 provides a ligand contact to ATP. The interval M575–G594 is interaction with HAX1. Residue S580 is modified to Phosphoserine. ATP contacts are provided by T624, G625, and D626. Residues S661 and S663 each carry the phosphoserine modification. Residues R677 and K683 each contribute to the ATP site. D702 provides a ligand contact to Mg(2+). N705 contacts ATP. A helical transmembrane segment spans residues K757–L776. Ca(2+) is bound by residues N767 and E770. At T777–L786 the chain is on the lumenal side. The chain crosses the membrane as a helical span at residues I787 to G807. The interaction with PLN stretch occupies residues I787–G807. Positions P788–E997 are interaction with TMEM64 and PDIA3. Positions 795, 798, and 799 each coordinate Ca(2+). Residues F808–L827 lie on the Cytoplasmic side of the membrane. A helical membrane pass occupies residues I828–A850. Topologically, residues A851–M896 are lumenal. A disulfide bond links C875 and C887. The helical transmembrane segment at T897–S916 threads the bilayer. Position 907 (E907) interacts with Ca(2+). The Cytoplasmic segment spans residues E917–N929. A helical transmembrane segment spans residues I930–Y948. Positions W931–L942 are interaction with PLN. The Lumenal segment spans residues V949–L963. The chain crosses the membrane as a helical span at residues T964 to K984. The Cytoplasmic portion of the chain corresponds to F985–E997.

The protein belongs to the cation transport ATPase (P-type) (TC 3.A.3) family. Type IIA subfamily. As to quaternary structure, interacts with sarcolipin (SLN); the interaction inhibits ATP2A2 Ca(2+) affinity. Interacts with phospholamban (PLN); the interaction inhibits ATP2A2 Ca(2+) affinity. Interacts with myoregulin (MRLN). Interacts with ARLN and ERLN; the interactions inhibit ATP2A2 Ca(2+) affinity. Interacts with STRIT1/DWORF; the interaction results in activation of ATP2A2. Interacts with the monomeric forms of SLN, PLN, ARLN, ERLN and STRI1/DWORF. Interacts with HAX1. Interacts with S100A8 and S100A9. Interacts with SLC35G1 and STIM1. Interacts with TMEM203. Interacts with TMEM64 and PDIA3. Interacts with TMX1. Interacts with TMX2. Interacts with VMP1; VMP1 competes with PLN and SLN to prevent them from forming an inhibitory complex with ATP2A2. Interacts with ULK1. Interacts with S100A1 in a Ca(2+)-dependent manner. Interacts with TUNAR. Interacts with FLVCR2; this interaction occurs in the absence of heme and promotes ATP2A2 proteasomal degradation; this complex is dissociated upon heme binding. Interacts with FNIP1. Interacts with TRAM2 (via C-terminus). Mg(2+) is required as a cofactor. Nitrated under oxidative stress. Nitration on the two tyrosine residues inhibits catalytic activity. Post-translationally, serotonylated on Gln residues by TGM2 in response to hypoxia, leading to its inactivation. As to expression, isoform 1 is expressed in the heart.

Its subcellular location is the endoplasmic reticulum membrane. It localises to the sarcoplasmic reticulum membrane. It carries out the reaction Ca(2+)(in) + ATP + H2O = Ca(2+)(out) + ADP + phosphate + H(+). With respect to regulation, has different conformational states with differential Ca2+ affinity. The E1 conformational state (active form) shows high Ca(2+) affinity, while the E2 state exhibits low Ca(2+) affinity. Binding of ATP allosterically increases its affinity for subsequent binding of Ca2+. Reversibly inhibited by phospholamban (PLN) at low calcium concentrations. PLN inhibits ATP2A2 Ca(2+) affinity by disrupting its allosteric activation by ATP. Inhibited by sarcolipin (SLN) and myoregulin (MRLN). The inhibition is blocked by VMP1. Enhanced by STRIT1/DWORF; STRIT1 increases activity by displacing sarcolipin (SLN), phospholamban (PLN) and myoregulin (MRLN). Stabilizes SERCA2 in its E2 state. In terms of biological role, this magnesium-dependent enzyme catalyzes the hydrolysis of ATP coupled with the translocation of calcium from the cytosol to the sarcoplasmic reticulum lumen. Involved in autophagy in response to starvation. Upon interaction with VMP1 and activation, controls ER-isolation membrane contacts for autophagosome formation. Also modulates ER contacts with lipid droplets, mitochondria and endosomes. In coordination with FLVCR2 mediates heme-stimulated switching from mitochondrial ATP synthesis to thermogenesis. Functionally, involved in the regulation of the contraction/relaxation cycle. Acts as a regulator of TNFSF11-mediated Ca(2+) signaling pathways via its interaction with TMEM64 which is critical for the TNFSF11-induced CREB1 activation and mitochondrial ROS generation necessary for proper osteoclast generation. Association between TMEM64 and SERCA2 in the ER leads to cytosolic Ca(2+) spiking for activation of NFATC1 and production of mitochondrial ROS, thereby triggering Ca(2+) signaling cascades that promote osteoclast differentiation and activation. This chain is Sarcoplasmic/endoplasmic reticulum calcium ATPase 2 (ATP2A2), found in Felis catus (Cat).